The sequence spans 602 residues: Elongation factor 4 (602 aa).

One can recognise a tr-type G domain in the interval 8-189 (KNIRNFSIIA…KIITTIPAPS (182 aa)). GTP is bound by residues 20–25 (DHGKST) and 136–139 (NKID).

Belongs to the TRAFAC class translation factor GTPase superfamily. Classic translation factor GTPase family. LepA subfamily.

The protein resides in the cell inner membrane. The catalysed reaction is GTP + H2O = GDP + phosphate + H(+). Its function is as follows. Required for accurate and efficient protein synthesis under certain stress conditions. May act as a fidelity factor of the translation reaction, by catalyzing a one-codon backward translocation of tRNAs on improperly translocated ribosomes. Back-translocation proceeds from a post-translocation (POST) complex to a pre-translocation (PRE) complex, thus giving elongation factor G a second chance to translocate the tRNAs correctly. Binds to ribosomes in a GTP-dependent manner. This is Elongation factor 4 from Helicobacter pylori (strain HPAG1).